The sequence spans 694 residues: DNA-binding protein RFX2 (694 aa).

The RFX-type winged-helix DNA-binding region spans 174-249 (HLQWLLDNYE…YHYYGIRLKP (76 aa)). 2 disordered regions span residues 267 to 310 (QQPI…QHHQ) and 658 to 694 (KDDV…MQEM). Residues 289–299 (PANSSQHASPE) are compositionally biased toward polar residues. The segment covering 300–310 (QSVAAQSQHHQ) has biased composition (low complexity).

This sequence belongs to the RFX family. As to quaternary structure, homodimer. Heterodimer; heterodimerizes with other rfx proteins. Preferentially expressed in ciliated tissues, such as neural tube, gastrocoel roof plate, epidermal multiciliated cells, otic vesicles and kidneys.

The protein resides in the nucleus. It is found in the cytoplasm. Transcription factor that acts as a key regulator of ciliogenesis. Specifically regulates expression of genes required for cilium assembly and function. Recognizes and binds the X-box, a regulatory motif with DNA sequence 5'-GTNRCC(0-3N)RGYAAC-3' present on promoters. Required for neural tube closure and neural ciliogenesis. The protein is DNA-binding protein RFX2 (rfx2) of Xenopus laevis (African clawed frog).